Reading from the N-terminus, the 234-residue chain is Mannose/glucose-specific lectin Cramoll (234 aa).

Glutamate 8 and aspartate 10 together coordinate Mn(2+). Ca(2+) contacts are provided by aspartate 10, tyrosine 12, asparagine 14, and aspartate 19. A carbohydrate is bound at residue tyrosine 12. 3 residues coordinate Mn(2+): aspartate 19, histidine 24, and serine 34. Leucine 99 to tyrosine 100 contacts a carbohydrate. Aspartate 205 serves as a coordination point for Ca(2+). An a carbohydrate-binding site is contributed by arginine 225.

Belongs to the leguminous lectin family. As to quaternary structure, homotetramer. In terms of processing, the alpha and beta chains are produced by partial proteolytic processing of the lectin precursor by an asparaginyl endopeptidase.

Functionally, glucose/D-mannose specific lectin. In Cratylia mollis (Camaratu bean), this protein is Mannose/glucose-specific lectin Cramoll.